A 227-amino-acid chain; its full sequence is Cytochrome c oxidase subunit 2 (227 aa).

The Mitochondrial intermembrane segment spans residues 1 to 14 (MAHAAQVGLQDATS). A helical membrane pass occupies residues 15–45 (PIMEELITFHDHALMIIFLICFLVLYALFLT). The Mitochondrial matrix segment spans residues 46-59 (LTTKLTSTNISDAQ). Residues 60 to 87 (EMETIWTILPAIILVLIALPSLRILYMT) form a helical membrane-spanning segment. Residues 88 to 227 (DEINDPSFTI…IFEMGPVFAL (140 aa)) lie on the Mitochondrial intermembrane side of the membrane. Positions 161, 196, 198, 200, 204, and 207 each coordinate Cu cation. Glutamate 198 contacts Mg(2+).

Belongs to the cytochrome c oxidase subunit 2 family. In terms of assembly, component of the cytochrome c oxidase (complex IV, CIV), a multisubunit enzyme composed of 14 subunits. The complex is composed of a catalytic core of 3 subunits MT-CO1, MT-CO2 and MT-CO3, encoded in the mitochondrial DNA, and 11 supernumerary subunits COX4I, COX5A, COX5B, COX6A, COX6B, COX6C, COX7A, COX7B, COX7C, COX8 and NDUFA4, which are encoded in the nuclear genome. The complex exists as a monomer or a dimer and forms supercomplexes (SCs) in the inner mitochondrial membrane with NADH-ubiquinone oxidoreductase (complex I, CI) and ubiquinol-cytochrome c oxidoreductase (cytochrome b-c1 complex, complex III, CIII), resulting in different assemblies (supercomplex SCI(1)III(2)IV(1) and megacomplex MCI(2)III(2)IV(2)). Found in a complex with TMEM177, COA6, COX18, COX20, SCO1 and SCO2. Interacts with TMEM177 in a COX20-dependent manner. Interacts with COX20. Interacts with COX16. The cofactor is Cu cation.

The protein resides in the mitochondrion inner membrane. It carries out the reaction 4 Fe(II)-[cytochrome c] + O2 + 8 H(+)(in) = 4 Fe(III)-[cytochrome c] + 2 H2O + 4 H(+)(out). Its function is as follows. Component of the cytochrome c oxidase, the last enzyme in the mitochondrial electron transport chain which drives oxidative phosphorylation. The respiratory chain contains 3 multisubunit complexes succinate dehydrogenase (complex II, CII), ubiquinol-cytochrome c oxidoreductase (cytochrome b-c1 complex, complex III, CIII) and cytochrome c oxidase (complex IV, CIV), that cooperate to transfer electrons derived from NADH and succinate to molecular oxygen, creating an electrochemical gradient over the inner membrane that drives transmembrane transport and the ATP synthase. Cytochrome c oxidase is the component of the respiratory chain that catalyzes the reduction of oxygen to water. Electrons originating from reduced cytochrome c in the intermembrane space (IMS) are transferred via the dinuclear copper A center (CU(A)) of subunit 2 and heme A of subunit 1 to the active site in subunit 1, a binuclear center (BNC) formed by heme A3 and copper B (CU(B)). The BNC reduces molecular oxygen to 2 water molecules using 4 electrons from cytochrome c in the IMS and 4 protons from the mitochondrial matrix. In Gorilla gorilla gorilla (Western lowland gorilla), this protein is Cytochrome c oxidase subunit 2 (MT-CO2).